A 147-amino-acid chain; its full sequence is Large ribosomal subunit protein uL13 (147 aa).

Belongs to the universal ribosomal protein uL13 family. In terms of assembly, part of the 50S ribosomal subunit.

Its function is as follows. This protein is one of the early assembly proteins of the 50S ribosomal subunit, although it is not seen to bind rRNA by itself. It is important during the early stages of 50S assembly. In Leuconostoc citreum (strain KM20), this protein is Large ribosomal subunit protein uL13.